The sequence spans 467 residues: L-seryl-tRNA(Sec) selenium transferase (467 aa).

At Lys-298 the chain carries N6-(pyridoxal phosphate)lysine.

It belongs to the SelA family. It depends on pyridoxal 5'-phosphate as a cofactor.

It localises to the cytoplasm. It catalyses the reaction L-seryl-tRNA(Sec) + selenophosphate + H(+) = L-selenocysteinyl-tRNA(Sec) + phosphate. It functions in the pathway aminoacyl-tRNA biosynthesis; selenocysteinyl-tRNA(Sec) biosynthesis; selenocysteinyl-tRNA(Sec) from L-seryl-tRNA(Sec) (bacterial route): step 1/1. Functionally, converts seryl-tRNA(Sec) to selenocysteinyl-tRNA(Sec) required for selenoprotein biosynthesis. This Alkaliphilus oremlandii (strain OhILAs) (Clostridium oremlandii (strain OhILAs)) protein is L-seryl-tRNA(Sec) selenium transferase.